We begin with the raw amino-acid sequence, 205 residues long: GTP cyclohydrolase-2 (205 aa).

49-53 (RLHSE) contributes to the GTP binding site. Cys-54, Cys-65, and Cys-67 together coordinate Zn(2+). GTP is bound by residues Gln-70, 92 to 94 (EGR), and Thr-114. The Proton acceptor role is filled by Asp-126. Arg-128 serves as the catalytic Nucleophile. GTP is bound by residues Thr-149 and Lys-154.

The protein belongs to the GTP cyclohydrolase II family. The cofactor is Zn(2+).

The enzyme catalyses GTP + 4 H2O = 2,5-diamino-6-hydroxy-4-(5-phosphoribosylamino)-pyrimidine + formate + 2 phosphate + 3 H(+). The protein operates within cofactor biosynthesis; riboflavin biosynthesis; 5-amino-6-(D-ribitylamino)uracil from GTP: step 1/4. Its function is as follows. Catalyzes the conversion of GTP to 2,5-diamino-6-ribosylamino-4(3H)-pyrimidinone 5'-phosphate (DARP), formate and pyrophosphate. The chain is GTP cyclohydrolase-2 from Pseudomonas paraeruginosa (strain DSM 24068 / PA7) (Pseudomonas aeruginosa (strain PA7)).